We begin with the raw amino-acid sequence, 663 residues long: UvrABC system protein B (663 aa).

Residues 31–271 form the Helicase ATP-binding domain; the sequence is DNIEGGEKAQ…EQSISKIQAE (241 aa). 44 to 51 provides a ligand contact to ATP; that stretch reads GATGTGKT. The Beta-hairpin motif lies at 97 to 120; that stretch reads YYDYYQPEAYVPSSDTYIEKDSSV. Residues 435–601 form the Helicase C-terminal domain; sequence QMDDLLGEIN…TIKKDIRDLI (167 aa). A UVR domain is found at 627-662; it reads QEAIKQLQKNMQEAAELLDFELAAQLRDLILELKAM.

Belongs to the UvrB family. In terms of assembly, forms a heterotetramer with UvrA during the search for lesions. Interacts with UvrC in an incision complex.

The protein resides in the cytoplasm. In terms of biological role, the UvrABC repair system catalyzes the recognition and processing of DNA lesions. A damage recognition complex composed of 2 UvrA and 2 UvrB subunits scans DNA for abnormalities. Upon binding of the UvrA(2)B(2) complex to a putative damaged site, the DNA wraps around one UvrB monomer. DNA wrap is dependent on ATP binding by UvrB and probably causes local melting of the DNA helix, facilitating insertion of UvrB beta-hairpin between the DNA strands. Then UvrB probes one DNA strand for the presence of a lesion. If a lesion is found the UvrA subunits dissociate and the UvrB-DNA preincision complex is formed. This complex is subsequently bound by UvrC and the second UvrB is released. If no lesion is found, the DNA wraps around the other UvrB subunit that will check the other stand for damage. In Streptococcus equi subsp. equi (strain 4047), this protein is UvrABC system protein B.